Reading from the N-terminus, the 391-residue chain is MSAPAPEATIGTLPSLLGATREELGDALAAIGVPEREIRMRTAQVWHWIYFHGIRSFDTMLNVGKGLRTTLAAHYSLERPQVVSEQVSVDGTRKWLIRLPPVDAQDRGAEVECVYIPESDRGTLCISSQVGCTLTCSFCHTGTQKLVRNLSAREIVSQLVVAREKLGDFPGLVPPKDGLLPTEGNRPITNIVFMGMGEPLYNFDNVRKAVSVLSDGEGLSLSRRRITVSTAGVVPQMEALGREAGSMLAVSLHAVRDDLRDKLVPLNKKYPIKTLLEACRTYPGASNARRITFEYVMLKDINDSPAEARELIRLLKGIPAKINLIPFNPWPGAPYDCSDWDRIERFSDIVFNAGYASPVRTPRGRDILAACGQLKSETEKLRARARLLGED.

Glutamate 112 acts as the Proton acceptor in catalysis. The Radical SAM core domain occupies 118 to 368; the sequence is ESDRGTLCIS…VRTPRGRDIL (251 aa). Cysteines 125 and 371 form a disulfide. [4Fe-4S] cluster-binding residues include cysteine 132, cysteine 136, and cysteine 139. S-adenosyl-L-methionine is bound by residues 197-198, serine 229, 251-253, and asparagine 328; these read GE and SLH. Cysteine 371 functions as the S-methylcysteine intermediate in the catalytic mechanism.

This sequence belongs to the radical SAM superfamily. RlmN family. It depends on [4Fe-4S] cluster as a cofactor.

It localises to the cytoplasm. The catalysed reaction is adenosine(2503) in 23S rRNA + 2 reduced [2Fe-2S]-[ferredoxin] + 2 S-adenosyl-L-methionine = 2-methyladenosine(2503) in 23S rRNA + 5'-deoxyadenosine + L-methionine + 2 oxidized [2Fe-2S]-[ferredoxin] + S-adenosyl-L-homocysteine. The enzyme catalyses adenosine(37) in tRNA + 2 reduced [2Fe-2S]-[ferredoxin] + 2 S-adenosyl-L-methionine = 2-methyladenosine(37) in tRNA + 5'-deoxyadenosine + L-methionine + 2 oxidized [2Fe-2S]-[ferredoxin] + S-adenosyl-L-homocysteine. Functionally, specifically methylates position 2 of adenine 2503 in 23S rRNA and position 2 of adenine 37 in tRNAs. m2A2503 modification seems to play a crucial role in the proofreading step occurring at the peptidyl transferase center and thus would serve to optimize ribosomal fidelity. The sequence is that of Dual-specificity RNA methyltransferase RlmN from Beijerinckia indica subsp. indica (strain ATCC 9039 / DSM 1715 / NCIMB 8712).